A 231-amino-acid polypeptide reads, in one-letter code: Probable methylthioribulose-1-phosphate dehydratase (231 aa).

Substrate is bound at residue cysteine 90. Positions 108 and 110 each coordinate Zn(2+). Glutamate 132 functions as the Proton donor/acceptor in the catalytic mechanism. Position 188 (histidine 188) interacts with Zn(2+).

It belongs to the aldolase class II family. MtnB subfamily. Requires Zn(2+) as cofactor.

It localises to the cytoplasm. It carries out the reaction 5-(methylsulfanyl)-D-ribulose 1-phosphate = 5-methylsulfanyl-2,3-dioxopentyl phosphate + H2O. It functions in the pathway amino-acid biosynthesis; L-methionine biosynthesis via salvage pathway; L-methionine from S-methyl-5-thio-alpha-D-ribose 1-phosphate: step 2/6. In terms of biological role, catalyzes the dehydration of methylthioribulose-1-phosphate (MTRu-1-P) into 2,3-diketo-5-methylthiopentyl-1-phosphate (DK-MTP-1-P). The protein is Probable methylthioribulose-1-phosphate dehydratase of Anopheles gambiae (African malaria mosquito).